The primary structure comprises 223 residues: Neurotrophic factor BDNF precursor form (223 aa).

The N-terminal stretch at 1–5 is a signal peptide; that stretch reads SCMKA. Residues 6 to 114 constitute a propeptide that is removed on maturation; that stretch reads APMKEVSIRG…AANMSMRVRR (109 aa). Asn107 carries N-linked (GlcNAc...) asparagine glycosylation. 2 cysteine pairs are disulfide-bonded: Cys127–Cys194 and Cys172–Cys223.

The protein belongs to the NGF-beta family.

It is found in the secreted. Functionally, promotes the survival of neuronal populations that are all located either in the central nervous system or directly connected to it. The sequence is that of Neurotrophic factor BDNF precursor form (BDNF) from Eryx colubrinus colubrinus.